Consider the following 640-residue polypeptide: Fructose-1,6-bisphosphatase class 3 (640 aa).

This sequence belongs to the FBPase class 3 family. Requires Mn(2+) as cofactor.

It carries out the reaction beta-D-fructose 1,6-bisphosphate + H2O = beta-D-fructose 6-phosphate + phosphate. Its pathway is carbohydrate biosynthesis; gluconeogenesis. The chain is Fructose-1,6-bisphosphatase class 3 from Lactococcus lactis subsp. cremoris (strain MG1363).